The sequence spans 187 residues: ATP synthase subunit delta (187 aa).

The protein belongs to the ATPase delta chain family. As to quaternary structure, F-type ATPases have 2 components, F(1) - the catalytic core - and F(0) - the membrane proton channel. F(1) has five subunits: alpha(3), beta(3), gamma(1), delta(1), epsilon(1). F(0) has three main subunits: a(1), b(2) and c(10-14). The alpha and beta chains form an alternating ring which encloses part of the gamma chain. F(1) is attached to F(0) by a central stalk formed by the gamma and epsilon chains, while a peripheral stalk is formed by the delta and b chains.

The protein resides in the cell membrane. F(1)F(0) ATP synthase produces ATP from ADP in the presence of a proton or sodium gradient. F-type ATPases consist of two structural domains, F(1) containing the extramembraneous catalytic core and F(0) containing the membrane proton channel, linked together by a central stalk and a peripheral stalk. During catalysis, ATP synthesis in the catalytic domain of F(1) is coupled via a rotary mechanism of the central stalk subunits to proton translocation. Its function is as follows. This protein is part of the stalk that links CF(0) to CF(1). It either transmits conformational changes from CF(0) to CF(1) or is implicated in proton conduction. The protein is ATP synthase subunit delta of Mesomycoplasma hyopneumoniae (strain 7448) (Mycoplasma hyopneumoniae).